The primary structure comprises 465 residues: Putative apoptosis inhibitor ORF106 (465 aa).

One copy of the BIR repeat lies at 291-357 (RECSFSTWPK…MEKETCGWLE (67 aa)). Positions 373–382 (EGGEDKEEDG) are enriched in acidic residues. The disordered stretch occupies residues 373–393 (EGGEDKEEDGGGGGVIEFPKN). Residues 405 to 447 (CKACYERKADIAFIPCGHVFSCNICTMEMFASYKKKKRCPMCR) form an RING-type zinc finger.

The polypeptide is Putative apoptosis inhibitor ORF106 (Magallana gigas (Pacific oyster)).